The primary structure comprises 782 residues: Endonuclease MutS2 (782 aa).

336–343 provides a ligand contact to ATP; the sequence is GPNTGGKT. One can recognise a Smr domain in the interval 707–782; sequence LDLRGYRYED…GFGVTVATLK (76 aa).

This sequence belongs to the DNA mismatch repair MutS family. MutS2 subfamily. In terms of assembly, homodimer. Binds to stalled ribosomes, contacting rRNA.

In terms of biological role, endonuclease that is involved in the suppression of homologous recombination and thus may have a key role in the control of bacterial genetic diversity. Functionally, acts as a ribosome collision sensor, splitting the ribosome into its 2 subunits. Detects stalled/collided 70S ribosomes which it binds and splits by an ATP-hydrolysis driven conformational change. Acts upstream of the ribosome quality control system (RQC), a ribosome-associated complex that mediates the extraction of incompletely synthesized nascent chains from stalled ribosomes and their subsequent degradation. Probably generates substrates for RQC. The polypeptide is Endonuclease MutS2 (Staphylococcus aureus (strain COL)).